The primary structure comprises 502 residues: Probable cytosol aminopeptidase (502 aa).

Positions 267 and 272 each coordinate Mn(2+). Residue Lys279 is part of the active site. 3 residues coordinate Mn(2+): Asp290, Asp349, and Glu351. Arg353 is a catalytic residue.

It belongs to the peptidase M17 family. It depends on Mn(2+) as a cofactor.

The protein localises to the cytoplasm. The enzyme catalyses Release of an N-terminal amino acid, Xaa-|-Yaa-, in which Xaa is preferably Leu, but may be other amino acids including Pro although not Arg or Lys, and Yaa may be Pro. Amino acid amides and methyl esters are also readily hydrolyzed, but rates on arylamides are exceedingly low.. It carries out the reaction Release of an N-terminal amino acid, preferentially leucine, but not glutamic or aspartic acids.. Presumably involved in the processing and regular turnover of intracellular proteins. Catalyzes the removal of unsubstituted N-terminal amino acids from various peptides. The sequence is that of Probable cytosol aminopeptidase from Aeromonas hydrophila subsp. hydrophila (strain ATCC 7966 / DSM 30187 / BCRC 13018 / CCUG 14551 / JCM 1027 / KCTC 2358 / NCIMB 9240 / NCTC 8049).